The primary structure comprises 306 residues: Follistatin-related protein 1 (306 aa).

Positions 1 to 18 are cleaved as a signal peptide; that stretch reads MWKRWLALSLVTIALVHG. The 24-residue stretch at 28–51 folds into the Follistatin-like domain; it reads ICANVFCGAGRECAVTEKGEPTCL. Disulfide bonds link cysteine 29–cysteine 40, cysteine 34–cysteine 50, cysteine 52–cysteine 82, cysteine 56–cysteine 75, and cysteine 64–cysteine 96. The Kazal-like domain maps to 46-98; sequence GEPTCLCIEQCKPHKRPVCGSNGKTYLNHCELHRDACLTGSKIQVDYDGHCKE. N-linked (GlcNAc...) asparagine glycosylation is present at asparagine 142. The EF-hand 1 domain occupies 142–176; the sequence is NYSEILDKYFKSFDNGDSHLDSSEFLKFVEQNETA. Serine 163 is modified (phosphoserine). Residues asparagine 173 and asparagine 178 are each glycosylated (N-linked (GlcNAc...) asparagine). In terms of domain architecture, EF-hand 2 spans 191–226; it reads LRSLCVDALIELSDENADWKLSFQEFLKCLNPSFNP. One can recognise a VWFC domain in the interval 231–285; sequence CALEDETYADGAETEVDCNRCVCSCGHWVCTAMTCDGKNQKGVQTHTEEEKTGYV.

Homodimer. Interacts with SCN10A. Interacts with DIP2A; DIP2A may act as a cell surface receptor for FSTL1. Interacts with BMP4. Interacts with CD14; this interaction promotes TL4-mediated signaling cascade. In terms of tissue distribution, during central nervous system development, strongly expressed in the telencephalon, diencephalon, brainstem, limbic system and spinal cord. Widely expressed in all organs.

Its subcellular location is the secreted. Functionally, secreted glycoprotein that is involved in various physiological processes, such as angiogenesis, regulation of the immune response, cell proliferation and differentiation. Plays a role in the development of the central nervous system, skeletal system, lungs, and ureter. Promotes endothelial cell survival, migration and differentiation into network structures in an AKT-dependent manner. Also promotes survival of cardiac myocytes. Initiates various signaling cascades by activating different receptors on the cell surface such as DIP2A, TLR4 or BMP receptors. The protein is Follistatin-related protein 1 (Fstl1) of Mus musculus (Mouse).